We begin with the raw amino-acid sequence, 365 residues long: D-alanine--D-alanine ligase (365 aa).

The region spanning 135-345 (KLLLKSFNIP…YESLVDNLVS (211 aa)) is the ATP-grasp domain. 168 to 223 (KQSLNYPVIVKPAMLGSSIGISIAYNDTQIEKCIEEAFEYDLTVVVEKFMKVREIE) contacts ATP. Positions 298, 312, and 314 each coordinate Mg(2+).

This sequence belongs to the D-alanine--D-alanine ligase family. It depends on Mg(2+) as a cofactor. Mn(2+) is required as a cofactor.

It is found in the cytoplasm. The catalysed reaction is 2 D-alanine + ATP = D-alanyl-D-alanine + ADP + phosphate + H(+). The protein operates within cell wall biogenesis; peptidoglycan biosynthesis. In terms of biological role, cell wall formation. The protein is D-alanine--D-alanine ligase of Borrelia hermsii (strain HS1 / DAH).